Here is a 901-residue protein sequence, read N- to C-terminus: HTH-type transcriptional regulator MalT (901 aa).

39-46 (SPAGYGKT) is a binding site for ATP. Positions 829-894 (ELIRTSPLTQ…DAVQHAQQLL (66 aa)) constitute an HTH luxR-type domain. The H-T-H motif DNA-binding region spans 853–872 (NEQIAGELAVAATTIKTHIR).

This sequence belongs to the MalT family. In terms of assembly, monomer in solution. Oligomerizes to an active state in the presence of the positive effectors ATP and maltotriose.

With respect to regulation, activated by ATP and maltotriose, which are both required for DNA binding. Positively regulates the transcription of the maltose regulon whose gene products are responsible for uptake and catabolism of malto-oligosaccharides. Specifically binds to the promoter region of its target genes, recognizing a short DNA motif called the MalT box. This is HTH-type transcriptional regulator MalT from Salmonella typhi.